We begin with the raw amino-acid sequence, 411 residues long: tRNA (guanine(37)-N(1))-methyltransferase (411 aa).

Residues His-216, 254-255 (DL), 282-283 (DG), and Asn-303 each bind S-adenosyl-L-methionine. The segment at 391-411 (ERQASKQDDPKRRKVAAENAA) is disordered.

The protein belongs to the class I-like SAM-binding methyltransferase superfamily. TRM5/TYW2 family. As to quaternary structure, monomer.

Its subcellular location is the mitochondrion matrix. It localises to the nucleus. It is found in the cytoplasm. It catalyses the reaction guanosine(37) in tRNA + S-adenosyl-L-methionine = N(1)-methylguanosine(37) in tRNA + S-adenosyl-L-homocysteine + H(+). Its function is as follows. Specifically methylates the N1 position of guanosine-37 in various cytoplasmic and mitochondrial tRNAs. Methylation is not dependent on the nature of the nucleoside 5' of the target nucleoside. This is the first step in the biosynthesis of wybutosine (yW), a modified base adjacent to the anticodon of tRNAs and required for accurate decoding. This is tRNA (guanine(37)-N(1))-methyltransferase from Phytophthora infestans (strain T30-4) (Potato late blight agent).